Reading from the N-terminus, the 487-residue chain is Acetyl-coenzyme A carboxylase carboxyl transferase subunit beta, chloroplastic (487 aa).

The region spanning 223-487 is the CoA carboxyltransferase N-terminal domain; that stretch reads LWVQCENCYG…LHAFFPLNQN (265 aa). Positions 227, 230, 246, and 249 each coordinate Zn(2+). The segment at 227–249 adopts a C4-type zinc-finger fold; the sequence is CENCYGLNYKKSFKSKMNLCEQC.

It belongs to the AccD/PCCB family. Acetyl-CoA carboxylase is a heterohexamer composed of biotin carboxyl carrier protein, biotin carboxylase and 2 subunits each of ACCase subunit alpha and ACCase plastid-coded subunit beta (accD). Requires Zn(2+) as cofactor.

The protein localises to the plastid. The protein resides in the chloroplast stroma. The catalysed reaction is N(6)-carboxybiotinyl-L-lysyl-[protein] + acetyl-CoA = N(6)-biotinyl-L-lysyl-[protein] + malonyl-CoA. It participates in lipid metabolism; malonyl-CoA biosynthesis; malonyl-CoA from acetyl-CoA: step 1/1. Functionally, component of the acetyl coenzyme A carboxylase (ACC) complex. Biotin carboxylase (BC) catalyzes the carboxylation of biotin on its carrier protein (BCCP) and then the CO(2) group is transferred by the transcarboxylase to acetyl-CoA to form malonyl-CoA. This Panax ginseng (Korean ginseng) protein is Acetyl-coenzyme A carboxylase carboxyl transferase subunit beta, chloroplastic.